The primary structure comprises 167 residues: Ribosome maturation factor RimM (167 aa).

Residues 94-165 (ENEYYYSDII…TIRITPMEGL (72 aa)) form the PRC barrel domain.

Belongs to the RimM family. As to quaternary structure, binds ribosomal protein uS19.

It localises to the cytoplasm. Functionally, an accessory protein needed during the final step in the assembly of 30S ribosomal subunit, possibly for assembly of the head region. Essential for efficient processing of 16S rRNA. May be needed both before and after RbfA during the maturation of 16S rRNA. It has affinity for free ribosomal 30S subunits but not for 70S ribosomes. This is Ribosome maturation factor RimM from Staphylococcus haemolyticus (strain JCSC1435).